Consider the following 183-residue polypeptide: Isopentenyl-diphosphate Delta-isomerase (183 aa).

Residues histidine 26 and histidine 33 each coordinate Mn(2+). In terms of domain architecture, Nudix hydrolase spans 31-165; it reads SLHLAFSSWL…PWAFSPWMVS (135 aa). The active site involves cysteine 68. Mn(2+) is bound at residue histidine 70. Residue glutamate 88 coordinates Mg(2+). Mn(2+)-binding residues include glutamate 115 and glutamate 117. The active site involves glutamate 117.

This sequence belongs to the IPP isomerase type 1 family. Homodimer. Mg(2+) is required as a cofactor. Mn(2+) serves as cofactor.

It is found in the cytoplasm. It catalyses the reaction isopentenyl diphosphate = dimethylallyl diphosphate. The protein operates within isoprenoid biosynthesis; dimethylallyl diphosphate biosynthesis; dimethylallyl diphosphate from isopentenyl diphosphate: step 1/1. In terms of biological role, catalyzes the 1,3-allylic rearrangement of the homoallylic substrate isopentenyl (IPP) to its highly electrophilic allylic isomer, dimethylallyl diphosphate (DMAPP). The polypeptide is Isopentenyl-diphosphate Delta-isomerase (Enterobacter sp. (strain 638)).